Here is a 194-residue protein sequence, read N- to C-terminus: Nucleoside triphosphate pyrophosphatase (194 aa).

Asp68 (proton acceptor) is an active-site residue.

It belongs to the Maf family. A divalent metal cation is required as a cofactor.

It is found in the cytoplasm. The enzyme catalyses a ribonucleoside 5'-triphosphate + H2O = a ribonucleoside 5'-phosphate + diphosphate + H(+). It catalyses the reaction a 2'-deoxyribonucleoside 5'-triphosphate + H2O = a 2'-deoxyribonucleoside 5'-phosphate + diphosphate + H(+). Nucleoside triphosphate pyrophosphatase. May have a dual role in cell division arrest and in preventing the incorporation of modified nucleotides into cellular nucleic acids. The chain is Nucleoside triphosphate pyrophosphatase from Corynebacterium jeikeium (strain K411).